We begin with the raw amino-acid sequence, 294 residues long: Syntaxin-19 (294 aa).

In terms of domain architecture, t-SNARE coiled-coil homology spans 209-271 (LSEIEQRHKE…NNTKEKFGLA (63 aa)).

Belongs to the syntaxin family. In terms of assembly, interacts with EGFR.

Its subcellular location is the cell membrane. The protein resides in the cytoplasm. Plays a role in endosomal trafficking of the epidermal growth factor receptor (EGFR). This chain is Syntaxin-19 (STX19), found in Homo sapiens (Human).